Consider the following 388-residue polypeptide: Phosphoglycerate kinase (388 aa).

Substrate contacts are provided by residues 21–23 (DLN), Arg36, 59–62 (HLGR), Arg114, and Arg147. ATP-binding positions include Lys198, Glu315, and 341-344 (GGDT).

It belongs to the phosphoglycerate kinase family. Monomer.

Its subcellular location is the cytoplasm. It carries out the reaction (2R)-3-phosphoglycerate + ATP = (2R)-3-phospho-glyceroyl phosphate + ADP. It functions in the pathway carbohydrate degradation; glycolysis; pyruvate from D-glyceraldehyde 3-phosphate: step 2/5. The protein is Phosphoglycerate kinase of Hahella chejuensis (strain KCTC 2396).